The chain runs to 307 residues: Oxygen-dependent coproporphyrinogen-III oxidase (307 aa).

Substrate is bound at residue S99. Positions 103 and 113 each coordinate a divalent metal cation. H113 functions as the Proton donor in the catalytic mechanism. Position 115–117 (115–117 (NVR)) interacts with substrate. The a divalent metal cation site is built by H152 and H182. An important for dimerization region spans residues 247-282 (YVEFNLVFDRGTLFGLQSGGRTESILMSMPPVVNWR). 265-267 (GGR) is a substrate binding site.

It belongs to the aerobic coproporphyrinogen-III oxidase family. Homodimer. The cofactor is a divalent metal cation.

It localises to the cytoplasm. It carries out the reaction coproporphyrinogen III + O2 + 2 H(+) = protoporphyrinogen IX + 2 CO2 + 2 H2O. It participates in porphyrin-containing compound metabolism; protoporphyrin-IX biosynthesis; protoporphyrinogen-IX from coproporphyrinogen-III (O2 route): step 1/1. Involved in the heme biosynthesis. Catalyzes the aerobic oxidative decarboxylation of propionate groups of rings A and B of coproporphyrinogen-III to yield the vinyl groups in protoporphyrinogen-IX. In Paraburkholderia xenovorans (strain LB400), this protein is Oxygen-dependent coproporphyrinogen-III oxidase.